We begin with the raw amino-acid sequence, 342 residues long: MTNILSPEKIENDQELPIRPSYLQEFVGQQQIKENLSVFIKAAKSRNEHLDHTLFYGPPGLGKTTLAKIISNEIGGNFKSTSGPAILKAADLAAILTNLEKNDVLFIDEIHRLNTAVEEVLYPAMEDFELDIIIGEGPAARSVKITLPKFTLIGATTRLGLLSNPLRDRFGIPMRLNFYNTEELKKVLNRASKLFDIDLTDSGSEEIAKRSRGTPRIALRLLRRIRDFAAVDGKSRVDKEISDFGLNRLEVDHIGLDSNDYRYLKFIADNYNGGPVGIETIAAALSEQRDALEETIEPYLIQIGLLQRTPRGRVITIAAFEHLKMPIPNQSHHQFNIFNENE.

Residues 1–179 (MTNILSPEKI…FGIPMRLNFY (179 aa)) are large ATPase domain (RuvB-L). Residues I18, R19, G60, K63, T64, T65, 126–128 (EDF), R169, Y179, and R216 each bind ATP. A Mg(2+)-binding site is contributed by T64. The segment at 180–250 (NTEELKKVLN…ISDFGLNRLE (71 aa)) is small ATPAse domain (RuvB-S). The segment at 253-342 (HIGLDSNDYR…HQFNIFNENE (90 aa)) is head domain (RuvB-H). DNA-binding residues include R289, R308, and R313.

Belongs to the RuvB family. As to quaternary structure, homohexamer. Forms an RuvA(8)-RuvB(12)-Holliday junction (HJ) complex. HJ DNA is sandwiched between 2 RuvA tetramers; dsDNA enters through RuvA and exits via RuvB. An RuvB hexamer assembles on each DNA strand where it exits the tetramer. Each RuvB hexamer is contacted by two RuvA subunits (via domain III) on 2 adjacent RuvB subunits; this complex drives branch migration. In the full resolvosome a probable DNA-RuvA(4)-RuvB(12)-RuvC(2) complex forms which resolves the HJ.

It is found in the cytoplasm. The catalysed reaction is ATP + H2O = ADP + phosphate + H(+). Functionally, the RuvA-RuvB-RuvC complex processes Holliday junction (HJ) DNA during genetic recombination and DNA repair, while the RuvA-RuvB complex plays an important role in the rescue of blocked DNA replication forks via replication fork reversal (RFR). RuvA specifically binds to HJ cruciform DNA, conferring on it an open structure. The RuvB hexamer acts as an ATP-dependent pump, pulling dsDNA into and through the RuvAB complex. RuvB forms 2 homohexamers on either side of HJ DNA bound by 1 or 2 RuvA tetramers; 4 subunits per hexamer contact DNA at a time. Coordinated motions by a converter formed by DNA-disengaged RuvB subunits stimulates ATP hydrolysis and nucleotide exchange. Immobilization of the converter enables RuvB to convert the ATP-contained energy into a lever motion, pulling 2 nucleotides of DNA out of the RuvA tetramer per ATP hydrolyzed, thus driving DNA branch migration. The RuvB motors rotate together with the DNA substrate, which together with the progressing nucleotide cycle form the mechanistic basis for DNA recombination by continuous HJ branch migration. Branch migration allows RuvC to scan DNA until it finds its consensus sequence, where it cleaves and resolves cruciform DNA. This chain is Holliday junction branch migration complex subunit RuvB, found in Rickettsia felis (strain ATCC VR-1525 / URRWXCal2) (Rickettsia azadi).